The sequence spans 428 residues: L-glutamyl-[BtrI acyl-carrier protein] decarboxylase (428 aa).

Lysine 49 is subject to N6-(pyridoxal phosphate)lysine. Residues glycine 228, 269–272, and tyrosine 375 each bind pyridoxal 5'-phosphate; that span reads ESGR. 2 residues coordinate substrate: arginine 272 and tyrosine 375.

The protein belongs to the Orn/Lys/Arg decarboxylase class-II family. In terms of assembly, homodimer. The cofactor is pyridoxal 5'-phosphate.

It catalyses the reaction gamma-L-glutamyl-[BtrI ACP] + H(+) = 4-aminobutanoyl-[BtrI ACP] + CO2. Its pathway is antibiotic biosynthesis; butirosin biosynthesis. Functionally, pyridoxal phosphate-dependent decarboxylase that catalyzes 1 step in the biosynthesis of the side chain of the aminoglycoside antibiotics in the biosynthetic pathway of butirosin. Able to decarboxylate L-ornithine, L-arginine, L-lysine, but not L-glutamate or any D-amino acids. Has low activity with substrates not bound to an acyl-carrier protein. In Niallia circulans (Bacillus circulans), this protein is L-glutamyl-[BtrI acyl-carrier protein] decarboxylase (btrK).